A 101-amino-acid chain; its full sequence is Small ribosomal subunit protein uS14 (101 aa).

The protein belongs to the universal ribosomal protein uS14 family. In terms of assembly, part of the 30S ribosomal subunit. Contacts proteins S3 and S10.

Its function is as follows. Binds 16S rRNA, required for the assembly of 30S particles and may also be responsible for determining the conformation of the 16S rRNA at the A site. This chain is Small ribosomal subunit protein uS14, found in Arthrobacter sp. (strain FB24).